A 165-amino-acid polypeptide reads, in one-letter code: Ribosome maturation factor RimM (165 aa).

In terms of domain architecture, PRC barrel spans 94 to 163 (EDEFYIADLN…KDYVTLNYQR (70 aa)).

Belongs to the RimM family. In terms of assembly, binds ribosomal protein uS19.

The protein localises to the cytoplasm. In terms of biological role, an accessory protein needed during the final step in the assembly of 30S ribosomal subunit, possibly for assembly of the head region. Essential for efficient processing of 16S rRNA. May be needed both before and after RbfA during the maturation of 16S rRNA. It has affinity for free ribosomal 30S subunits but not for 70S ribosomes. The protein is Ribosome maturation factor RimM of Rickettsia akari (strain Hartford).